The primary structure comprises 559 residues: Putative ankyrin repeat protein RBE_0902 (559 aa).

ANK repeat units follow at residues 11–40 (DGWT…EQAI), 46–75 (DGNT…DQAI), 81–110 (DGNT…TKQN), 158–189 (DDWT…VINH), 228–257 (NNDT…DQAI), 263–292 (DGNT…DQAI), 298–327 (YGNT…EQAI), 333–364 (QCDT…AINC), 372–402 (FGFT…EVII), and 524–554 (IDNN…WGLE).

This Rickettsia bellii (strain RML369-C) protein is Putative ankyrin repeat protein RBE_0902.